Here is a 704-residue protein sequence, read N- to C-terminus: Capsule polysaccharide modification protein LipA (704 aa).

The protein localises to the cell inner membrane. Functionally, involved in the phospholipid modification of the capsular polysaccharide, a strong requirement for its translocation to the cell surface. The protein is Capsule polysaccharide modification protein LipA (lipA) of Neisseria meningitidis serogroup B (strain ATCC BAA-335 / MC58).